The chain runs to 197 residues: NADH-quinone oxidoreductase subunit C (197 aa).

The protein belongs to the complex I 30 kDa subunit family. As to quaternary structure, NDH-1 is composed of 14 different subunits. Subunits NuoB, C, D, E, F, and G constitute the peripheral sector of the complex.

It localises to the cell inner membrane. The enzyme catalyses a quinone + NADH + 5 H(+)(in) = a quinol + NAD(+) + 4 H(+)(out). Functionally, NDH-1 shuttles electrons from NADH, via FMN and iron-sulfur (Fe-S) centers, to quinones in the respiratory chain. The immediate electron acceptor for the enzyme in this species is believed to be ubiquinone. Couples the redox reaction to proton translocation (for every two electrons transferred, four hydrogen ions are translocated across the cytoplasmic membrane), and thus conserves the redox energy in a proton gradient. The chain is NADH-quinone oxidoreductase subunit C from Rickettsia typhi (strain ATCC VR-144 / Wilmington).